A 156-amino-acid chain; its full sequence is Protein-export protein SecB (156 aa).

Belongs to the SecB family. As to quaternary structure, homotetramer, a dimer of dimers. One homotetramer interacts with 1 SecA dimer.

Its subcellular location is the cytoplasm. Functionally, one of the proteins required for the normal export of preproteins out of the cell cytoplasm. It is a molecular chaperone that binds to a subset of precursor proteins, maintaining them in a translocation-competent state. It also specifically binds to its receptor SecA. The polypeptide is Protein-export protein SecB (Pectobacterium carotovorum subsp. carotovorum (strain PC1)).